The primary structure comprises 228 residues: Vacuolar-sorting protein snf7 (228 aa).

Coiled coils occupy residues 25 to 94 and 125 to 226; these read ILGL…QINA and EKVD…QAEM.

The protein belongs to the SNF7 family. A component of the endosomal sorting required for transport complex III (ESCRT-III).

Its subcellular location is the cytoplasm. It localises to the endosome membrane. Its function is as follows. Required for the sorting and concentration of proteins resulting in the entry of these proteins into the invaginating vesicles of the multivesicular body (MVB). Also required for the proteolytic cleavage of the transcription factor pacc-1 in response to alkaline ambient pH. The protein is Vacuolar-sorting protein snf7 (vsp-3) of Neurospora crassa (strain ATCC 24698 / 74-OR23-1A / CBS 708.71 / DSM 1257 / FGSC 987).